A 475-amino-acid chain; its full sequence is Ankyrin repeat, SAM and basic leucine zipper domain-containing protein 1 (475 aa).

The disordered stretch occupies residues 1-23 (MAAARFRGLAVAGGGESSESEDD). A phosphoserine mark is found at serine 17, serine 18, and serine 20. 6 ANK repeats span residues 45 to 74 (EKNETFKRALTAGDVALVEELLDSGISVDS), 78 to 107 (YGWTPLMYAASVSNVDLVRVLLDRGAKASF), 110 to 144 (DKQTILITACSARGSEEQILKCVELLLSRNADPNV), 148 to 177 (RLMTPIMYAARDGHPQVVALLVAHGAEVNT), 181 to 210 (NGYTALTWAARQGHKNVVLKLLELGANKML), and 214 to 243 (DGKTPSEIAKRNKHLEIFNFLSLTLNPLEG). Residues 272 to 334 (SYTAFGDLEI…KILAALKELE (63 aa)) form the SAM domain.

Interacts with DDX4, PIWIL1, RANBP9 and TDRD1.

The protein resides in the cytoplasm. In terms of biological role, plays a central role during spermatogenesis by repressing transposable elements and preventing their mobilization, which is essential for the germline integrity. Acts via the piRNA metabolic process, which mediates the repression of transposable elements during meiosis by forming complexes composed of piRNAs and Piwi proteins and governs the methylation and subsequent repression of transposons. Its association with pi-bodies suggests a participation in the primary piRNAs metabolic process. Required prior to the pachytene stage to facilitate the production of multiple types of piRNAs, including those associated with repeats involved in the regulation of retrotransposons. May act by mediating protein-protein interactions during germ cell maturation. In Equus caballus (Horse), this protein is Ankyrin repeat, SAM and basic leucine zipper domain-containing protein 1 (ASZ1).